The chain runs to 346 residues: Dihydroorotate dehydrogenase (quinone) (346 aa).

FMN contacts are provided by residues 62–66 (AGMDK) and threonine 86. Lysine 66 serves as a coordination point for substrate. 111–115 (NRMGF) contacts substrate. Residues asparagine 142 and asparagine 175 each contribute to the FMN site. Asparagine 175 is a binding site for substrate. The active-site Nucleophile is serine 178. Asparagine 180 lines the substrate pocket. Residues lysine 211 and valine 239 each contribute to the FMN site. 240 to 241 (NT) lines the substrate pocket. Residues glycine 261, glycine 289, and 310-311 (YT) contribute to the FMN site.

This sequence belongs to the dihydroorotate dehydrogenase family. Type 2 subfamily. In terms of assembly, monomer. It depends on FMN as a cofactor.

The protein resides in the cell membrane. It catalyses the reaction (S)-dihydroorotate + a quinone = orotate + a quinol. It participates in pyrimidine metabolism; UMP biosynthesis via de novo pathway; orotate from (S)-dihydroorotate (quinone route): step 1/1. Catalyzes the conversion of dihydroorotate to orotate with quinone as electron acceptor. This is Dihydroorotate dehydrogenase (quinone) from Thermus thermophilus (strain ATCC 27634 / DSM 579 / HB8).